The following is a 181-amino-acid chain: Trafficking protein particle complex subunit 3-like protein (181 aa).

The S-palmitoyl cysteine moiety is linked to residue cysteine 68.

This sequence belongs to the TRAPP small subunits family. BET3 subfamily. As to quaternary structure, homodimer. Component of the multisubunit TRAPP (transport protein particle) complex, which includes at least TRAPPC2, TRAPPC2L, TRAPPC3, TRAPPC3L, TRAPPC4, TRAPPC5, TRAPPC8, TRAPPC9, TRAPPC10, TRAPPC11 and TRAPPC12.

It is found in the golgi apparatus. The protein localises to the cis-Golgi network. It localises to the endoplasmic reticulum. Functionally, may play a role in vesicular transport from endoplasmic reticulum to Golgi. The sequence is that of Trafficking protein particle complex subunit 3-like protein (TRAPPC3L) from Homo sapiens (Human).